Consider the following 225-residue polypeptide: Ribose-5-phosphate isomerase A (225 aa).

Substrate contacts are provided by residues 33-36 (TGST), 84-87 (DGAD), and 96-99 (KGGG). Catalysis depends on E105, which acts as the Proton acceptor. A substrate-binding site is contributed by K123.

The protein belongs to the ribose 5-phosphate isomerase family. As to quaternary structure, homodimer.

The catalysed reaction is aldehydo-D-ribose 5-phosphate = D-ribulose 5-phosphate. Its pathway is carbohydrate degradation; pentose phosphate pathway; D-ribose 5-phosphate from D-ribulose 5-phosphate (non-oxidative stage): step 1/1. In terms of biological role, catalyzes the reversible conversion of ribose-5-phosphate to ribulose 5-phosphate. The polypeptide is Ribose-5-phosphate isomerase A (Halobacterium salinarum (strain ATCC 29341 / DSM 671 / R1)).